We begin with the raw amino-acid sequence, 120 residues long: Large ribosomal subunit protein uL18c (120 aa).

This sequence belongs to the universal ribosomal protein uL18 family. Part of the 50S ribosomal subunit; contacts the 5S rRNA.

The protein localises to the plastid. It is found in the chloroplast. Its function is as follows. Binds 5S rRNA, forms part of the central protuberance of the 50S subunit. The polypeptide is Large ribosomal subunit protein uL18c (rpl18) (Pyropia yezoensis (Susabi-nori)).